A 198-amino-acid chain; its full sequence is Dephospho-CoA kinase (198 aa).

The region spanning 4-198 (IIGITGGIAS…DSQLRRLQNE (195 aa)) is the DPCK domain. 12–17 (ASGKST) is an ATP binding site.

Belongs to the CoaE family.

It is found in the cytoplasm. It catalyses the reaction 3'-dephospho-CoA + ATP = ADP + CoA + H(+). It participates in cofactor biosynthesis; coenzyme A biosynthesis; CoA from (R)-pantothenate: step 5/5. Functionally, catalyzes the phosphorylation of the 3'-hydroxyl group of dephosphocoenzyme A to form coenzyme A. The polypeptide is Dephospho-CoA kinase (Streptococcus mutans serotype c (strain ATCC 700610 / UA159)).